The primary structure comprises 187 residues: Resolvase OPG149 (187 aa).

Belongs to the RuvC family. Poxviruses-type subfamily. Mg(2+) serves as cofactor.

Its function is as follows. Plays a role in DNA replication by cleaving viral DNA concatamers to yield unit-length viral genomes. The concatamer junctions contain inverted repeat sequences that can be extruded as cruciforms, yielding Holliday junctions that A22 protein cleaves. The chain is Resolvase OPG149 (OPG149) from Vaccinia virus (strain Western Reserve) (VACV).